The sequence spans 307 residues: Protein FAM76A (307 aa).

2 disordered regions span residues 161 to 181 (SRLS…SSIQ) and 287 to 307 (KQAA…ITSP). Residues 217-297 (IIAQLKEEVA…QAAALSKGKK (81 aa)) are a coiled coil.

This sequence belongs to the FAM76 family.

The protein is Protein FAM76A (FAM76A) of Gallus gallus (Chicken).